The following is a 473-amino-acid chain: ATP synthase subunit beta (473 aa).

153-160 is an ATP binding site; it reads GGAGVGKT.

Belongs to the ATPase alpha/beta chains family. F-type ATPases have 2 components, CF(1) - the catalytic core - and CF(0) - the membrane proton channel. CF(1) has five subunits: alpha(3), beta(3), gamma(1), delta(1), epsilon(1). CF(0) has three main subunits: a(1), b(2) and c(9-12). The alpha and beta chains form an alternating ring which encloses part of the gamma chain. CF(1) is attached to CF(0) by a central stalk formed by the gamma and epsilon chains, while a peripheral stalk is formed by the delta and b chains.

The protein localises to the cell inner membrane. It carries out the reaction ATP + H2O + 4 H(+)(in) = ADP + phosphate + 5 H(+)(out). Produces ATP from ADP in the presence of a proton gradient across the membrane. The catalytic sites are hosted primarily by the beta subunits. This chain is ATP synthase subunit beta, found in Rickettsia rickettsii (strain Iowa).